The chain runs to 412 residues: Glutamate-pyruvate aminotransferase AlaC (412 aa).

Lys244 bears the N6-(pyridoxal phosphate)lysine mark.

The protein belongs to the class-I pyridoxal-phosphate-dependent aminotransferase family. In terms of assembly, homodimer. Pyridoxal 5'-phosphate serves as cofactor.

It is found in the cytoplasm. The enzyme catalyses L-alanine + 2-oxoglutarate = pyruvate + L-glutamate. It participates in amino-acid biosynthesis; L-alanine biosynthesis. Functionally, involved in the biosynthesis of alanine. Catalyzes the transamination of pyruvate by glutamate, leading to the formation of L-alanine and 2-oxoglutarate. Is also able to catalyze the reverse reaction. The sequence is that of Glutamate-pyruvate aminotransferase AlaC from Escherichia coli (strain K12).